The primary structure comprises 145 residues: Functional amyloid chaperone FapA (145 aa).

The N-terminal stretch at 1–27 (MRKRDKRLYHLLLVGCVLGSLSLTAQA) is a signal peptide.

Belongs to the FapA family. As to quaternary structure, monomer in solution. Interacts with FapC but not FapB in vitro.

Its subcellular location is the periplasm. Functionally, an intrinsically disordered chaperone for fibril amyloid FapC that guards against fibrillation, pro within the periplasm. Upon overexpression of the endogenous six-gene locus (fapA-fapF), cells form large clumps during liquid growth, make large amounts of biofilm and produce relatively unstable amyloid fibrils. The protein is Functional amyloid chaperone FapA of Pseudomonas putida (strain ATCC 700007 / DSM 6899 / JCM 31910 / BCRC 17059 / LMG 24140 / F1).